Reading from the N-terminus, the 411-residue chain is MAAFRAAHRLLGHILRNESSAGLVTQRWSSSAAVASVPKSSDPKPHAQPDKRKPKTGILMLNMGGPETLDDVHGFLLRLFLDKDLMTLPAQSKLAPFIAKRRTPKIQEQYSKIGGGSPIKKWTEQQGEGMVKLLDELSPATAPHKYYIGFRYVRPLTEAAIEEMERDGVERAIAFTQYPQYSCSTTGSSLNAIYRYYNAKGTQPKMKWSVIDRWPTHPLLIQCFADHIQKELNMFPADKRGEVVILFSAHSLPMSVVNRGDPYPQEVGATVQKVMERLGFSNPYRLVWQSKVGPMAWLGPQTDESIKGLCQRGKKNILLVPIAFTSDHIETLYELDIEYAQVLAKECGVENIRRSESLNGNPLFSKALADLVLSHMKSSEICSKQLSLRCPMCVNPVCGEAKSFFTKQQQQ.

The transit peptide at 1–41 (MAAFRAAHRLLGHILRNESSAGLVTQRWSSSAAVASVPKSS) directs the protein to the mitochondrion. The segment at 34–55 (VASVPKSSDPKPHAQPDKRKPK) is disordered. Positions 41–51 (SDPKPHAQPDK) are enriched in basic and acidic residues. Protoporphyrin IX-binding residues include arginine 102, tyrosine 110, and serine 117. A [2Fe-2S] cluster-binding site is contributed by cysteine 183. Active-site residues include histidine 217 and aspartate 370. Residues cysteine 390, cysteine 393, and cysteine 398 each contribute to the [2Fe-2S] cluster site.

The protein belongs to the ferrochelatase family. As to quaternary structure, homodimer. Homotetramer. It depends on [2Fe-2S] cluster as a cofactor.

The protein resides in the mitochondrion inner membrane. It catalyses the reaction heme b + 2 H(+) = protoporphyrin IX + Fe(2+). The protein operates within porphyrin-containing compound metabolism; protoheme biosynthesis; protoheme from protoporphyrin-IX: step 1/1. Functionally, catalyzes the ferrous insertion into protoporphyrin IX. The sequence is that of Ferrochelatase, mitochondrial from Xenopus laevis (African clawed frog).